Consider the following 202-residue polypeptide: Transmembrane 4 L6 family member 4 (202 aa).

Residues methionine 1–cysteine 9 lie on the Cytoplasmic side of the membrane. The helical transmembrane segment at leucine 10 to phenylalanine 30 threads the bilayer. Over proline 31–tyrosine 48 the chain is Extracellular. A helical transmembrane segment spans residues phenylalanine 49–leucine 69. At glutamine 70–threonine 93 the chain is on the cytoplasmic side. Residues leucine 94–isoleucine 114 form a helical membrane-spanning segment. Residues asparagine 115–threonine 158 lie on the Extracellular side of the membrane. N-linked (GlcNAc...) asparagine glycosylation occurs at asparagine 156. A helical membrane pass occupies residues leucine 159–isoleucine 179. Topologically, residues asparagine 180–valine 202 are cytoplasmic.

This sequence belongs to the L6 tetraspanin family. As to expression, expressed in liver and testis. Up-regulated in regenerating liver after partial hepatectomy.

The protein localises to the membrane. In terms of biological role, regulates the adhesive and proliferative status of intestinal epithelial cells. Can mediate density-dependent cell proliferation. The chain is Transmembrane 4 L6 family member 4 (Tm4sf4) from Rattus norvegicus (Rat).